The primary structure comprises 223 residues: Deoxyribose-phosphate aldolase (223 aa).

The active-site Proton donor/acceptor is the D91. Residue K154 is the Schiff-base intermediate with acetaldehyde of the active site. K183 functions as the Proton donor/acceptor in the catalytic mechanism.

Belongs to the DeoC/FbaB aldolase family. DeoC type 1 subfamily.

Its subcellular location is the cytoplasm. The enzyme catalyses 2-deoxy-D-ribose 5-phosphate = D-glyceraldehyde 3-phosphate + acetaldehyde. It functions in the pathway carbohydrate degradation; 2-deoxy-D-ribose 1-phosphate degradation; D-glyceraldehyde 3-phosphate and acetaldehyde from 2-deoxy-alpha-D-ribose 1-phosphate: step 2/2. Functionally, catalyzes a reversible aldol reaction between acetaldehyde and D-glyceraldehyde 3-phosphate to generate 2-deoxy-D-ribose 5-phosphate. In Geobacillus kaustophilus (strain HTA426), this protein is Deoxyribose-phosphate aldolase.